A 309-amino-acid polypeptide reads, in one-letter code: Tagatose-6-phosphate kinase (309 aa).

This sequence belongs to the carbohydrate kinase PfkB family. LacC subfamily.

It carries out the reaction D-tagatofuranose 6-phosphate + ATP = D-tagatofuranose 1,6-bisphosphate + ADP + H(+). The protein operates within carbohydrate metabolism; D-tagatose 6-phosphate degradation; D-glyceraldehyde 3-phosphate and glycerone phosphate from D-tagatose 6-phosphate: step 1/2. This is Tagatose-6-phosphate kinase from Streptococcus pyogenes serotype M2 (strain MGAS10270).